Reading from the N-terminus, the 174-residue chain is Crossover junction endodeoxyribonuclease RuvC (174 aa).

Active-site residues include aspartate 8, glutamate 67, and aspartate 139. Residues aspartate 8, glutamate 67, and aspartate 139 each contribute to the Mg(2+) site.

It belongs to the RuvC family. In terms of assembly, homodimer which binds Holliday junction (HJ) DNA. The HJ becomes 2-fold symmetrical on binding to RuvC with unstacked arms; it has a different conformation from HJ DNA in complex with RuvA. In the full resolvosome a probable DNA-RuvA(4)-RuvB(12)-RuvC(2) complex forms which resolves the HJ. Mg(2+) is required as a cofactor.

Its subcellular location is the cytoplasm. The catalysed reaction is Endonucleolytic cleavage at a junction such as a reciprocal single-stranded crossover between two homologous DNA duplexes (Holliday junction).. Its function is as follows. The RuvA-RuvB-RuvC complex processes Holliday junction (HJ) DNA during genetic recombination and DNA repair. Endonuclease that resolves HJ intermediates. Cleaves cruciform DNA by making single-stranded nicks across the HJ at symmetrical positions within the homologous arms, yielding a 5'-phosphate and a 3'-hydroxyl group; requires a central core of homology in the junction. The consensus cleavage sequence is 5'-(A/T)TT(C/G)-3'. Cleavage occurs on the 3'-side of the TT dinucleotide at the point of strand exchange. HJ branch migration catalyzed by RuvA-RuvB allows RuvC to scan DNA until it finds its consensus sequence, where it cleaves and resolves the cruciform DNA. The sequence is that of Crossover junction endodeoxyribonuclease RuvC from Pseudomonas savastanoi pv. phaseolicola (strain 1448A / Race 6) (Pseudomonas syringae pv. phaseolicola (strain 1448A / Race 6)).